Here is a 181-residue protein sequence, read N- to C-terminus: Small ribosomal subunit protein bS16 (181 aa).

A disordered region spans residues 150–181 (KKAAEEAAKAAAEAPAEEAAPAEEAATEAAAE). A compositionally biased stretch (low complexity) spans 158 to 181 (KAAAEAPAEEAAPAEEAATEAAAE).

This sequence belongs to the bacterial ribosomal protein bS16 family.

In Bacteroides fragilis (strain ATCC 25285 / DSM 2151 / CCUG 4856 / JCM 11019 / LMG 10263 / NCTC 9343 / Onslow / VPI 2553 / EN-2), this protein is Small ribosomal subunit protein bS16.